Here is a 1178-residue protein sequence, read N- to C-terminus: Mediator of RNA polymerase II transcription subunit 14 (1178 aa).

Positions 1 to 12 (MDNSVHNNSNTT) are enriched in polar residues. Disordered regions lie at residues 1–50 (MDNS…PITV) and 1064–1178 (LAGT…VVLD). Low complexity-rich tracts occupy residues 1074–1112 (PTQIQQPQQPSPHPQQAQVQEQRQQPQQQQQANPLQGAA) and 1119–1164 (HQLQ…AQQR).

The protein belongs to the Mediator complex subunit 14 family. Component of the Mediator complex.

Its subcellular location is the nucleus. Its function is as follows. Component of the Mediator complex, a coactivator involved in the regulated transcription of nearly all RNA polymerase II-dependent genes. Mediator functions as a bridge to convey information from gene-specific regulatory proteins to the basal RNA polymerase II transcription machinery. Mediator is recruited to promoters by direct interactions with regulatory proteins and serves as a scaffold for the assembly of a functional preinitiation complex with RNA polymerase II and the general transcription factors. This is Mediator of RNA polymerase II transcription subunit 14 (RGR1) from Chaetomium globosum (strain ATCC 6205 / CBS 148.51 / DSM 1962 / NBRC 6347 / NRRL 1970) (Soil fungus).